The primary structure comprises 948 residues: Protein translocase subunit SecA (948 aa).

ATP contacts are provided by residues glutamine 91, 109–113, and aspartate 509; that span reads GEGKT.

The protein belongs to the SecA family. As to quaternary structure, monomer and homodimer. Part of the essential Sec protein translocation apparatus which comprises SecA, SecYEG and auxiliary proteins SecDF. Other proteins may also be involved.

The protein resides in the cell inner membrane. It localises to the cellular thylakoid membrane. It is found in the cytoplasm. The enzyme catalyses ATP + H2O + cellular proteinSide 1 = ADP + phosphate + cellular proteinSide 2.. Its function is as follows. Part of the Sec protein translocase complex. Interacts with the SecYEG preprotein conducting channel. Has a central role in coupling the hydrolysis of ATP to the transfer of proteins into and across the cell membrane, serving as an ATP-driven molecular motor driving the stepwise translocation of polypeptide chains across the membrane. Functionally, probably participates in protein translocation into and across both the cytoplasmic and thylakoid membranes in cyanobacterial cells. In Synechococcus elongatus (strain ATCC 33912 / PCC 7942 / FACHB-805) (Anacystis nidulans R2), this protein is Protein translocase subunit SecA.